The sequence spans 484 residues: MTRAIMLQGTGSDVGKSVLVAGLCRLAANRGLKVRPFKPQNMSNNAAVSDDGGEIGRAQWLQSLAARVPSSVHMNPVLLKPQSDVGSQVILQGKVAGQAKGREYQALKPKLLGAVMESFGRVSAGADLVVVEGAGSPAEINLRAGDIANMGFATHANVPVVLVGDIDRGGVIASLVGTHAILPEEDRRMVAGYLINKFRGDVSLFDDGIAAVGRFTGWPCFGVVPWLKSAARLPAEDSVVLEKLARGSGKALKVAVPVLSRIANFDDLDPLAAEPEVELVFVRPGMSLPQDAGLVVIPGSKSTISDLKNFRAQGWDRDLERHVRRGGRVIGICGGYQILGTRVADPLGIEGSEREIAGLGLLSVETEMAPEKTVRNSRAWSLEHDVGLEGYEIHLGKTTGADCERAPVTIDGRPDGAMSADGRVMGTYLHGLFGSDAYRAALLKSLGIEGGGANYRQSVDSALDEIAAELEGVLDGAWLNRLLG.

In terms of domain architecture, GATase cobBQ-type spans 251–438 (ALKVAVPVLS…LHGLFGSDAY (188 aa)). Cys333 serves as the catalytic Nucleophile. His430 is an active-site residue.

Belongs to the CobB/CobQ family. CobQ subfamily.

It functions in the pathway cofactor biosynthesis; adenosylcobalamin biosynthesis. In terms of biological role, catalyzes amidations at positions B, D, E, and G on adenosylcobyrinic A,C-diamide. NH(2) groups are provided by glutamine, and one molecule of ATP is hydrogenolyzed for each amidation. The chain is Cobyric acid synthase from Sinorhizobium fredii (strain NBRC 101917 / NGR234).